Here is a 372-residue protein sequence, read N- to C-terminus: MPRPSRESYGEQKPPYSYISLTAMAIWSSPEKMLPLSDIYKFITDRFPYYRKNTQRWQNSLRHNLSFNDCFIKVPRRPDRPGKGAYWALHPQAFDMFENGSLLRRRKRFKLHKNDKDLLNEELTALANLNRFFFTTRNGGSAAHMSPLDMNNAAAMRLDPLPRSTAHMPNSLGPGVPLPHVMPASMSGADHTNLADMGLTNLPALTSSEIEGPLSLRPKRSFTIESLITPDKPEHPSEDEDDEDDRVDIDVVECSGISRYPTTPAASEEYMSASRSSRTEDPLPPMHTINAGAHVPFLHYATGANVAGLPASGIPNSPTTYELAISHPLFMMAAPIANMHNIYYNNVTLVAPAQQYRSPEVQNRIDNDMRTI.

Positions 12 to 103 form a DNA-binding region, fork-head; sequence QKPPYSYISL…FDMFENGSLL (92 aa). Disordered stretches follow at residues 225–245 and 261–281; these read ESLITPDKPEHPSEDEDDEDD and PTTPAASEEYMSASRSSRTED.

In terms of tissue distribution, expressed in early embryogenesis in 14 symmetrical pairs of segmentally arranged neuroblasts. Also, later in embryogenesis, in a cluster of cells in head region.

It is found in the nucleus. In terms of biological role, involved in development during embryogenesis. The polypeptide is Fork head domain-containing protein FD4 (fd96Ca) (Drosophila melanogaster (Fruit fly)).